The primary structure comprises 77 residues: Sec-independent protein translocase protein TatA (77 aa).

The chain crosses the membrane as a helical span at residues M1–G21. Positions G46–Q77 are disordered.

The protein belongs to the TatA/E family. As to quaternary structure, the Tat system comprises two distinct complexes: a TatABC complex, containing multiple copies of TatA, TatB and TatC subunits, and a separate TatA complex, containing only TatA subunits. Substrates initially bind to the TatABC complex, which probably triggers association of the separate TatA complex to form the active translocon.

It localises to the cell inner membrane. Its function is as follows. Part of the twin-arginine translocation (Tat) system that transports large folded proteins containing a characteristic twin-arginine motif in their signal peptide across membranes. TatA could form the protein-conducting channel of the Tat system. The chain is Sec-independent protein translocase protein TatA from Cupriavidus necator (strain ATCC 17699 / DSM 428 / KCTC 22496 / NCIMB 10442 / H16 / Stanier 337) (Ralstonia eutropha).